We begin with the raw amino-acid sequence, 216 residues long: Fibroblast growth factor 17 (216 aa).

An N-terminal signal peptide occupies residues 1–22 (MGAARLLPNLTLCLQLLILCCQ). Asn137 is a glycosylation site (N-linked (GlcNAc...) asparagine). Positions 190-216 (EKQKQFEFVGSAPTRRTKRTRRPQPLT) are disordered. The span at 204 to 216 (RRTKRTRRPQPLT) shows a compositional bias: basic residues.

The protein belongs to the heparin-binding growth factors family. In terms of assembly, interacts with FGFR3 and FGFR4. In terms of tissue distribution, preferentially expressed in the embryonic brain.

The protein resides in the secreted. Plays an important role in the regulation of embryonic development and as signaling molecule in the induction and patterning of the embryonic brain. Required for normal brain development. The chain is Fibroblast growth factor 17 (FGF17) from Homo sapiens (Human).